The chain runs to 317 residues: Type II methyltransferase M.NgoBI (317 aa).

One can recognise an SAM-dependent MTase C5-type domain in the interval 2–302 (YKTIDLFSGI…KICSLLFPAR (301 aa)). Cys71 is a catalytic residue.

It belongs to the class I-like SAM-binding methyltransferase superfamily. C5-methyltransferase family.

It carries out the reaction a 2'-deoxycytidine in DNA + S-adenosyl-L-methionine = a 5-methyl-2'-deoxycytidine in DNA + S-adenosyl-L-homocysteine + H(+). Functionally, a methylase, recognizes the double-stranded sequence 5'-RGCGCY-3', methylates C-5 on both strands, and protects the DNA from cleavage by the NgoBI endonuclease. The chain is Type II methyltransferase M.NgoBI (ngoBIM) from Neisseria gonorrhoeae.